Here is a 953-residue protein sequence, read N- to C-terminus: Translation initiation factor IF-2 (953 aa).

2 disordered regions span residues 48–248 (SSFS…AELA) and 279–363 (TKLK…TERK). 3 stretches are compositionally biased toward basic and acidic residues: residues 80–89 (TGSEHAEKTQ), 98–111 (FKAEREARAKEQAA), and 140–188 (QGDK…ENHK). Residues 191-207 (RFTNQKKQGRQEPQSKS) show a composition bias toward polar residues. Over residues 229–248 (RQSETRFRAQQEAKRLAELA) the composition is skewed to basic and acidic residues. A compositionally biased stretch (polar residues) spans 282–291 (KSSNISAKST). Basic and acidic residues predominate over residues 300-317 (ARPEKNRELTHHSQEGQK). Positions 322 to 338 (SWNSQNQVRNQKNSNWN) are enriched in low complexity. Residues 339-348 (KNKKTKKGKN) show a composition bias toward basic residues. The tr-type G domain maps to 454-623 (ERAPVVTIMG…LLVAEVEELK (170 aa)). The G1 stretch occupies residues 463–470 (GHVDHGKT). GTP is bound at residue 463–470 (GHVDHGKT). The tract at residues 488–492 (GITQH) is G2. Residues 509–512 (DTPG) are G3. GTP-binding positions include 509–513 (DTPGH) and 563–566 (NKID). A G4 region spans residues 563–566 (NKID). A G5 region spans residues 599–601 (SAK).

This sequence belongs to the TRAFAC class translation factor GTPase superfamily. Classic translation factor GTPase family. IF-2 subfamily.

The protein resides in the cytoplasm. One of the essential components for the initiation of protein synthesis. Protects formylmethionyl-tRNA from spontaneous hydrolysis and promotes its binding to the 30S ribosomal subunits. Also involved in the hydrolysis of GTP during the formation of the 70S ribosomal complex. This is Translation initiation factor IF-2 from Streptococcus pyogenes serotype M18 (strain MGAS8232).